The following is a 73-amino-acid chain: MCRIFIVLLVVAALAIIIEGQLTFSSGWGNGKRSISSEQINDDCNPEEAIFQIYKLIVSEGERIRACQRDGKM.

The N-terminal stretch at 1–20 (MCRIFIVLLVVAALAIIIEG) is a signal peptide. The residue at position 21 (Gln21) is a Pyrrolidone carboxylic acid. The residue at position 30 (Asn30) is an Asparagine amide. A propeptide spanning residues 34–73 (SISSEQINDDCNPEEAIFQIYKLIVSEGERIRACQRDGKM) is cleaved from the precursor.

As to expression, expressed in corpora cardiaca (CC), corpora allata (CA) and gnathal ganglion (GNG) (at protein level). Expression in CC and CA detected in all animals, expression in GNG detected in few animals (at protein level). Not expressed in antennal lobe (AL) (at protein level).

It localises to the secreted. Its function is as follows. This hormone, released from cells in the corpora cardiaca, causes release of diglycerides from the fat body and stimulation of muscles to use these diglycerides as an energy source during energy-demanding processes. The sequence is that of Adipokinetic prohormone type 2 from Agrotis ipsilon (Black cutworm moth).